The chain runs to 301 residues: Sulfate adenylyltransferase subunit 2 (301 aa).

This sequence belongs to the PAPS reductase family. CysD subfamily. Heterodimer composed of CysD, the smaller subunit, and CysN.

It catalyses the reaction sulfate + ATP + H(+) = adenosine 5'-phosphosulfate + diphosphate. The protein operates within sulfur metabolism; hydrogen sulfide biosynthesis; sulfite from sulfate: step 1/3. Its function is as follows. With CysN forms the ATP sulfurylase (ATPS) that catalyzes the adenylation of sulfate producing adenosine 5'-phosphosulfate (APS) and diphosphate, the first enzymatic step in sulfur assimilation pathway. APS synthesis involves the formation of a high-energy phosphoric-sulfuric acid anhydride bond driven by GTP hydrolysis by CysN coupled to ATP hydrolysis by CysD. The sequence is that of Sulfate adenylyltransferase subunit 2 from Geotalea daltonii (strain DSM 22248 / JCM 15807 / FRC-32) (Geobacter daltonii).